The following is a 281-amino-acid chain: NADPH-dependent 7-cyano-7-deazaguanine reductase (281 aa).

I88 to S90 lines the substrate pocket. Position 90-91 (S90–K91) interacts with NADPH. Residue C189 is the Thioimide intermediate of the active site. The active-site Proton donor is the D196. H228–E229 is a substrate binding site. Residue R257 to G258 participates in NADPH binding.

Belongs to the GTP cyclohydrolase I family. QueF type 2 subfamily. As to quaternary structure, homodimer.

It localises to the cytoplasm. It catalyses the reaction 7-aminomethyl-7-carbaguanine + 2 NADP(+) = 7-cyano-7-deazaguanine + 2 NADPH + 3 H(+). The protein operates within tRNA modification; tRNA-queuosine biosynthesis. Functionally, catalyzes the NADPH-dependent reduction of 7-cyano-7-deazaguanine (preQ0) to 7-aminomethyl-7-deazaguanine (preQ1). This Yersinia enterocolitica serotype O:8 / biotype 1B (strain NCTC 13174 / 8081) protein is NADPH-dependent 7-cyano-7-deazaguanine reductase.